Consider the following 327-residue polypeptide: 2-methoxy-6-polyprenyl-1,4-benzoquinol methylase, mitochondrial (327 aa).

The N-terminal 49 residues, 1–49, are a transit peptide targeting the mitochondrion; it reads MAAPRCCVLWRVCGRGWWRATGHCRLPGCHRSWPWATLGTRSLSQEKRA. Residues threonine 117, aspartate 171, and 199–200 contribute to the S-adenosyl-L-methionine site; that span reads DA.

This sequence belongs to the class I-like SAM-binding methyltransferase superfamily. MenG/UbiE family. Component of a multi-subunit COQ enzyme complex, composed of at least COQ3, COQ4, COQ5, COQ6, COQ7 and COQ9. Interacts with PYURF; the interaction is direct, stabilizes COQ5 protein and associates PYURF with COQ enzyme complex.

Its subcellular location is the mitochondrion inner membrane. It carries out the reaction 2-methoxy-6-(all-trans-decaprenyl)benzene-1,4-diol + S-adenosyl-L-methionine = 5-methoxy-2-methyl-3-(all-trans-decaprenyl)benzene-1,4-diol + S-adenosyl-L-homocysteine + H(+). The protein operates within cofactor biosynthesis; ubiquinone biosynthesis. Functionally, methyltransferase required for the conversion of 2-decaprenyl-6-methoxy-1,4-benzoquinol (DDMQH2) to 2-decaprenyl-3-methyl-6-methoxy-1,4-benzoquinol (DMQH2). This is 2-methoxy-6-polyprenyl-1,4-benzoquinol methylase, mitochondrial from Mus musculus (Mouse).